An 87-amino-acid chain; its full sequence is UPF0250 protein ESA_02696 (87 aa).

It belongs to the UPF0250 family.

This chain is UPF0250 protein ESA_02696, found in Cronobacter sakazakii (strain ATCC BAA-894) (Enterobacter sakazakii).